Reading from the N-terminus, the 1481-residue chain is Cystic fibrosis transmembrane conductance regulator (1481 aa).

At 1–77 the chain is on the cytoplasmic side; it reads MQRSPLEKAS…KLINALRRCF (77 aa). The chain crosses the membrane as a helical span at residues 78-98; it reads FWRFMFYGIILYLGEVTKAVQ. One can recognise an ABC transmembrane type-1 1 domain in the interval 81-365; the sequence is FMFYGIILYL…WAVQTWYDSL (285 aa). Residues 99–122 are Extracellular-facing; sequence PLLLGRIIASYDPDNKVERSIAIY. Residues 123-146 traverse the membrane as a helical segment; it reads LGIGLCLLFIVRTLLLHPAIFGLH. Residues 147 to 195 are Cytoplasmic-facing; it reads HIGMQMRIAMFSLIYKKTLKLSSRVLDKISIGQLVSLLSNNLNKFDEGL. A helical transmembrane segment spans residues 196 to 216; it reads ALAHFVWIAPLQVTLLMGLLW. At 217-222 the chain is on the extracellular side; sequence DLLQAF. A helical membrane pass occupies residues 223–243; sequence TFCGLAFLVVLALLQAGLGKM. Topologically, residues 244–298 are cytoplasmic; sequence MMKYRDQRAGKINERLVITSEMIENIQSVKAYCWEEAMEKIIENLRQTELKLTRK. A helical transmembrane segment spans residues 299–319; the sequence is AAYVRYLNSSAFFFSGFFVVF. The Extracellular segment spans residues 320–339; the sequence is LSVLPYALLKGIILRKIFTT. A helical membrane pass occupies residues 340–358; sequence ISFCIVLRMAVTRQFPWAV. The Cytoplasmic portion of the chain corresponds to 359-858; sequence QTWYDSLGAI…YLRYITVHKS (500 aa). ATP contacts are provided by residues Trp-401, 457–464, and Gln-492; that span reads GSTGAGKT. In terms of domain architecture, ABC transporter 1 spans 421–645; sequence ISNCDTSLFF…RPDFSSKLMG (225 aa). Cys-523 carries S-palmitoyl cysteine lipidation. A phosphoserine mark is found at Ser-548 and Ser-659. A disordered R region region spans residues 653–831; that stretch reads TAERRNSIIT…EEINEEDLRD (179 aa). Ser-669 carries the phosphoserine; by PKA modification. At Ser-685 the chain carries Phosphoserine. Lys-687 participates in a covalent cross-link: Glycyl lysine isopeptide (Lys-Gly) (interchain with G-Cter in ubiquitin). 2 positions are modified to phosphoserine: Ser-699 and Ser-711. Phosphothreonine is present on Thr-716. Phosphoserine is present on residues Ser-736, Ser-767, Ser-790, Ser-795, and Ser-813. Residues 859 to 879 traverse the membrane as a helical segment; sequence LMFVLIWCLVVFLVEVAASLV. Residues 859–1155 enclose the ABC transmembrane type-1 2 domain; sequence LMFVLIWCLV…AVNSSIDVDS (297 aa). The Extracellular portion of the chain corresponds to 880–918; sequence VLCLFPKILLQDKGNSTKNASNSYAVIITSTSSYYIFYI. N-linked (GlcNAc...) asparagine glycosylation is found at Asn-894 and Asn-898. Residues 919–939 traverse the membrane as a discontinuously helical segment; the sequence is YVGVADTLLALGLFRGLPLVH. At 940–990 the chain is on the cytoplasmic side; the sequence is TLITVSKTLHHKMLQSVLQAPMSTLNTLKTGGILNRFSKDIAVLDDLLPLT. The helical transmembrane segment at 991 to 1011 threads the bilayer; sequence IFDFIQLLLIVIGAVVVVSVL. Residues 1012–1013 are Extracellular-facing; sequence QP. The chain crosses the membrane as a helical span at residues 1014–1034; sequence YIFLATVPVIAAFILLRGYFL. Topologically, residues 1035-1095 are cytoplasmic; it reads HTSQQLKQLE…TANWFLYLST (61 aa). A helical transmembrane segment spans residues 1096 to 1116; that stretch reads LRWFQMRIEMIFVIFFIAVTF. Topologically, residues 1117-1130 are extracellular; that stretch reads ISILTTGEGEGRVG. The chain crosses the membrane as a helical span at residues 1131–1151; sequence IILTLAMNIMGTLQWAVNSSI. At 1152–1481 the chain is on the cytoplasmic side; sequence DVDSLMRSVS…TEEEVQETKL (330 aa). Positions 1211 to 1444 constitute an ABC transporter 2 domain; that stretch reads MTVKDLTAKY…KSLFRQAISP (234 aa). ATP contacts are provided by residues Tyr-1220 and 1245 to 1252; that span reads GRTGSGKS. Residues 1387-1481 form an interaction with GORASP2 region; sequence RTLKQAFADC…TEEEVQETKL (95 aa). The S-palmitoyl cysteine moiety is linked to residue Cys-1396. Ser-1457 bears the Phosphoserine mark. Residues 1479–1481 carry the PDZ-binding motif; sequence TKL.

Belongs to the ABC transporter superfamily. ABCC family. CFTR transporter (TC 3.A.1.202) subfamily. In terms of assembly, monomer; does not require oligomerization for channel activity. May form oligomers in the membrane. Interacts with SLC26A3, SLC26A6 and NHERF1. Interacts with SHANK2. Interacts with MYO6. Interacts (via C-terminus) with GOPC (via PDZ domain); this promotes CFTR internalization and thereby decreases channel activity. Interacts with SLC4A7 through NHERF1. Found in a complex with MYO5B and RAB11A. Interacts with ANO1. Interacts with SLC26A8. Interacts with AHCYL1; the interaction increases CFTR activity. Interacts with CSE1L. The core-glycosylated form interacts with GORASP2 (via PDZ GRASP-type 1 domain) in respone to ER stress. Interacts with MARCHF2; the interaction leads to CFTR ubiqtuitination and degradation. Interacts with ADGRG2. N-glycosylated. In terms of processing, phosphorylated; cAMP treatment promotes phosphorylation and activates the channel. Dephosphorylation decreases the ATPase activity (in vitro). Phosphorylation at PKA sites activates the channel. Phosphorylation at PKC sites enhances the response to phosphorylation by PKA. Phosphorylated by AMPK; this inhibits channel activity. Post-translationally, ubiquitinated, leading to its degradation in the lysosome. Deubiquitination by USP10 in early endosomes enhances its endocytic recycling to the cell membrane. Ubiquitinated by RNF185 during ER stress. Ubiquitinated by MARCHF2.

The protein localises to the apical cell membrane. It is found in the early endosome membrane. The protein resides in the cell membrane. It localises to the recycling endosome membrane. Its subcellular location is the endoplasmic reticulum membrane. The protein localises to the nucleus. The enzyme catalyses ATP + H2O + closed Cl(-) channel = ADP + phosphate + open Cl(-) channel.. It catalyses the reaction chloride(in) = chloride(out). The catalysed reaction is hydrogencarbonate(in) = hydrogencarbonate(out). It carries out the reaction ATP + H2O = ADP + phosphate + H(+). Epithelial ion channel that plays an important role in the regulation of epithelial ion and water transport and fluid homeostasis. Mediates the transport of chloride ions across the cell membrane. Possesses an intrinsic ATPase activity and utilizes ATP to gate its channel; the passive flow of anions through the channel is gated by cycles of ATP binding and hydrolysis by the ATP-binding domains. The ion channel is also permeable to HCO(3)(-); selectivity depends on the extracellular chloride concentration. Exerts its function also by modulating the activity of other ion channels and transporters. Contributes to the regulation of the pH and the ion content of the epithelial fluid layer. Modulates the activity of the epithelial sodium channel (ENaC) complex, in part by regulating the cell surface expression of the ENaC complex. May regulate bicarbonate secretion and salvage in epithelial cells by regulating the transporter SLC4A7. Can inhibit the chloride channel activity of ANO1. Plays a role in the chloride and bicarbonate homeostasis during sperm epididymal maturation and capacitation. In Ovis aries (Sheep), this protein is Cystic fibrosis transmembrane conductance regulator.